The primary structure comprises 1358 residues: Probable aldehyde oxidase 1 (1358 aa).

Residues 4–91 (AAAVVAVNGE…HCAVTTSEGI (88 aa)) form the 2Fe-2S ferredoxin-type domain. [2Fe-2S] cluster is bound by residues Cys43, Cys48, Cys51, and Cys73. The region spanning 236–418 (AVTGDGCWFH…ISISIPDWCS (183 aa)) is the FAD-binding PCMH-type domain. Positions 540 to 567 (KPENANNVPNGSCTTNGTTNGSAESTVD) are disordered. A compositionally biased stretch (low complexity) spans 549–561 (NGSCTTNGTTNGS).

Belongs to the xanthine dehydrogenase family. Aldehyde oxidases (AO) are homodimers and heterodimers of AO subunits. [2Fe-2S] cluster is required as a cofactor. The cofactor is FAD. It depends on Mo-molybdopterin as a cofactor.

The catalysed reaction is an aldehyde + O2 + H2O = a carboxylate + H2O2 + H(+). In Oryza sativa subsp. japonica (Rice), this protein is Probable aldehyde oxidase 1.